The chain runs to 384 residues: MEIVKTIIPHNRSYIEPPIPSATEWLANMSVMHVSCLTIACVFVAITFLSSFFHLFFVLKYVSNERIRNDMYALIFMFPITTFASLVGMFIPRAAIFLYAVSLVYFMFTLFIMVTLLFNIFGGRQEMSAYLLQRNIRVNFTVPPLCFFKFLPTVESTDQNLRRIEWLVFQTPIIRTLLELVSVVVSMEQEGRRESVWFVFSQLMALLSMCIAFYGCYVMVPLGREKHAPYRFDFLFRTCDIAQCIYTIQKFVFEFAAAVGLITSDRYLPAAAKALWWASFMCTWEMMLLSALCSYCLRPAKCKFFDLYPGNDMPALSARDGSNSRVPSFSRRLSIEYEPRIAGVMLEPPSRSSLSITPRDKIEDPTTVSYFADNFDSLSQIQGQ.

The Extracellular segment spans residues 1 to 38 (MEIVKTIIPHNRSYIEPPIPSATEWLANMSVMHVSCLT). Residues N11 and N28 are each glycosylated (N-linked (GlcNAc...) asparagine). Residues 39–59 (IACVFVAITFLSSFFHLFFVL) form a helical membrane-spanning segment. The Cytoplasmic portion of the chain corresponds to 60–70 (KYVSNERIRND). A helical membrane pass occupies residues 71–91 (MYALIFMFPITTFASLVGMFI). Topologically, residues 92–93 (PR) are extracellular. A helical membrane pass occupies residues 94–114 (AAIFLYAVSLVYFMFTLFIMV). At 115–165 (TLLFNIFGGRQEMSAYLLQRNIRVNFTVPPLCFFKFLPTVESTDQNLRRIE) the chain is on the cytoplasmic side. The chain crosses the membrane as a helical span at residues 166 to 186 (WLVFQTPIIRTLLELVSVVVS). The Extracellular segment spans residues 187-202 (MEQEGRRESVWFVFSQ). Residues 203 to 223 (LMALLSMCIAFYGCYVMVPLG) form a helical membrane-spanning segment. Residues 224–240 (REKHAPYRFDFLFRTCD) are Cytoplasmic-facing. A helical transmembrane segment spans residues 241–261 (IAQCIYTIQKFVFEFAAAVGL). The Extracellular segment spans residues 262–273 (ITSDRYLPAAAK). The chain crosses the membrane as a helical span at residues 274-294 (ALWWASFMCTWEMMLLSALCS). The Cytoplasmic portion of the chain corresponds to 295-384 (YCLRPAKCKF…FDSLSQIQGQ (90 aa)).

This sequence belongs to the OST-alpha family.

Its subcellular location is the cell membrane. Probable transporter. In Caenorhabditis elegans, this protein is Organic solute transporter alpha-like protein 1 (osta-1).